The primary structure comprises 319 residues: Lipoyl synthase (319 aa).

Residues 1-28 are disordered; the sequence is MVVLVDTVSSTPVRPRHPEKAARPDALS. Basic and acidic residues predominate over residues 16-28; sequence RHPEKAARPDALS. Residues cysteine 61, cysteine 66, cysteine 72, cysteine 87, cysteine 91, cysteine 94, and serine 300 each contribute to the [4Fe-4S] cluster site. Residues 73-289 form the Radical SAM core domain; it reads WDKKHATFMI…AKTAYAKGFL (217 aa).

Belongs to the radical SAM superfamily. Lipoyl synthase family. The cofactor is [4Fe-4S] cluster.

The protein localises to the cytoplasm. It catalyses the reaction [[Fe-S] cluster scaffold protein carrying a second [4Fe-4S](2+) cluster] + N(6)-octanoyl-L-lysyl-[protein] + 2 oxidized [2Fe-2S]-[ferredoxin] + 2 S-adenosyl-L-methionine + 4 H(+) = [[Fe-S] cluster scaffold protein] + N(6)-[(R)-dihydrolipoyl]-L-lysyl-[protein] + 4 Fe(3+) + 2 hydrogen sulfide + 2 5'-deoxyadenosine + 2 L-methionine + 2 reduced [2Fe-2S]-[ferredoxin]. It functions in the pathway protein modification; protein lipoylation via endogenous pathway; protein N(6)-(lipoyl)lysine from octanoyl-[acyl-carrier-protein]: step 2/2. In terms of biological role, catalyzes the radical-mediated insertion of two sulfur atoms into the C-6 and C-8 positions of the octanoyl moiety bound to the lipoyl domains of lipoate-dependent enzymes, thereby converting the octanoylated domains into lipoylated derivatives. The sequence is that of Lipoyl synthase from Rhodopseudomonas palustris (strain HaA2).